The following is a 1193-amino-acid chain: DNA-directed RNA polymerase subunit beta (1193 aa).

Acidic residues predominate over residues 1149 to 1162 (EEEIEMRDLEDEED). The segment at 1149-1193 (EEEIEMRDLEDEEDAKQADGLALSGDEEPEETASADVERDVVTKE) is disordered. Basic and acidic residues predominate over residues 1184-1193 (DVERDVVTKE).

It belongs to the RNA polymerase beta chain family. As to quaternary structure, RNAP is composed of a core of 2 alpha, a beta and a beta' subunit. The core is associated with a delta subunit, and at least one of epsilon or omega. When a sigma factor is associated with the core the holoenzyme is formed, which can initiate transcription.

The enzyme catalyses RNA(n) + a ribonucleoside 5'-triphosphate = RNA(n+1) + diphosphate. Its function is as follows. DNA-dependent RNA polymerase catalyzes the transcription of DNA into RNA using the four ribonucleoside triphosphates as substrates. The protein is DNA-directed RNA polymerase subunit beta of Bacillus subtilis (strain 168).